Reading from the N-terminus, the 513-residue chain is uncharacterized protein (513 aa).

The TRAM domain occupies 3–61 (NLKIGQKLQLEIERMGINGEGIGVISGRLVFIPYALPGEEVLVEITENARNFSRAKLVK). Residues Gln309, Tyr338, Asp359, and Asp407 each coordinate S-adenosyl-L-methionine. Cys434 serves as the catalytic Nucleophile.

The protein belongs to the class I-like SAM-binding methyltransferase superfamily. RNA M5U methyltransferase family.

This is an uncharacterized protein from Lactococcus lactis subsp. lactis (strain IL1403) (Streptococcus lactis).